The following is a 463-amino-acid chain: GTPase Der (463 aa).

EngA-type G domains follow at residues 27-190 (PVVA…PEVG) and 200-373 (RRVA…ASWD). Residues 33-40 (GRPNVGKS), 80-84 (DTGGW), 142-145 (NKVD), 206-213 (GKPNVGKS), 253-257 (DTAGL), and 318-321 (NKWD) contribute to the GTP site. The KH-like domain maps to 374–456 (TRIATGPLNT…PIRVNVRVRE (83 aa)).

It belongs to the TRAFAC class TrmE-Era-EngA-EngB-Septin-like GTPase superfamily. EngA (Der) GTPase family. In terms of assembly, associates with the 50S ribosomal subunit.

GTPase that plays an essential role in the late steps of ribosome biogenesis. The chain is GTPase Der from Mycobacterium bovis (strain ATCC BAA-935 / AF2122/97).